The chain runs to 670 residues: DNA ligase (670 aa).

NAD(+) contacts are provided by residues 33-37 (DAEFD), 82-83 (SL), and E113. K115 acts as the N6-AMP-lysine intermediate in catalysis. Residues R136, E170, K285, and K309 each contribute to the NAD(+) site. Residues C403, C406, C421, and C427 each contribute to the Zn(2+) site. The 84-residue stretch at 587-670 (EQNLYLSGKT…EVLKAGDNNG (84 aa)) folds into the BRCT domain.

Belongs to the NAD-dependent DNA ligase family. LigA subfamily. The cofactor is Mg(2+). Mn(2+) is required as a cofactor.

It carries out the reaction NAD(+) + (deoxyribonucleotide)n-3'-hydroxyl + 5'-phospho-(deoxyribonucleotide)m = (deoxyribonucleotide)n+m + AMP + beta-nicotinamide D-nucleotide.. Its function is as follows. DNA ligase that catalyzes the formation of phosphodiester linkages between 5'-phosphoryl and 3'-hydroxyl groups in double-stranded DNA using NAD as a coenzyme and as the energy source for the reaction. It is essential for DNA replication and repair of damaged DNA. In Halothermothrix orenii (strain H 168 / OCM 544 / DSM 9562), this protein is DNA ligase.